Reading from the N-terminus, the 126-residue chain is Small ribosomal subunit protein uS13 (126 aa).

Residues 92–126 (HRRGLPANGQRTHTNARTRKGPRKGMLQRRPAATK) form a disordered region. Over residues 105–118 (TNARTRKGPRKGML) the composition is skewed to basic residues.

The protein belongs to the universal ribosomal protein uS13 family. Part of the 30S ribosomal subunit. Forms a loose heterodimer with protein S19. Forms two bridges to the 50S subunit in the 70S ribosome.

Located at the top of the head of the 30S subunit, it contacts several helices of the 16S rRNA. In the 70S ribosome it contacts the 23S rRNA (bridge B1a) and protein L5 of the 50S subunit (bridge B1b), connecting the 2 subunits; these bridges are implicated in subunit movement. Contacts the tRNAs in the A and P-sites. This Sorangium cellulosum (strain So ce56) (Polyangium cellulosum (strain So ce56)) protein is Small ribosomal subunit protein uS13.